We begin with the raw amino-acid sequence, 984 residues long: Glutamate [NMDA] receptor subunit 1 (984 aa).

The N-terminal stretch at 1–24 is a signal peptide; sequence MAAAFAYRWLLCAAGIVNVLPIGA. Over 25–570 the chain is Extracellular; sequence QRHTASDNPS…TLVSFLQPFS (546 aa). N-linked (GlcNAc...) asparagine glycans are attached at residues asparagine 255, asparagine 311, asparagine 342, asparagine 394, asparagine 451, asparagine 478, and asparagine 498. Residues 527–529 and arginine 534 contribute to the glycine site; that span reads PLT. The helical transmembrane segment at 571 to 591 threads the bilayer; it reads NTLWILVMVSVHVVALVLYLL. Topologically, residues 592–648 are cytoplasmic; the sequence is DRFSPFGRFKLSHSDSNEEKALNLSSAVWFAWGVLLNSGIGEGTPRSFSARVLGMVW. The helical transmembrane segment at 649 to 669 threads the bilayer; that stretch reads AGFAMIIVASYTANLAAFLVL. Residues 670–828 are Extracellular-facing; it reads ERPKTKLSGI…KTPNTLGLKN (159 aa). N-linked (GlcNAc...) asparagine glycosylation occurs at asparagine 690. Positions 700 and 744 each coordinate glycine. A helical membrane pass occupies residues 829–849; the sequence is MAGVFILVGVGIAGGVGLIII. Residues 850–984 lie on the Cytoplasmic side of the membrane; sequence EVIYKKHQVK…YTSDVSHLVV (135 aa). Residues 947–984 form a disordered region; that stretch reads KSGLVPPALGLGKTRPQQNPLPPRYSPGYTSDVSHLVV. Over residues 974-984 the composition is skewed to polar residues; sequence GYTSDVSHLVV.

Belongs to the glutamate-gated ion channel (TC 1.A.10.1) family. As to quaternary structure, forms a heteromeric NMDA channel with Nmdar2.

Its subcellular location is the cell membrane. It localises to the postsynaptic cell membrane. The protein resides in the postsynaptic density. Functionally, NMDA receptor subtype of glutamate-gated ion channels with high calcium permeability and voltage-dependent sensitivity to magnesium. Mediated by glycine. This protein plays a key role in synaptic plasticity, synaptogenesis, excitotoxicity, memory acquisition and learning. It mediates neuronal functions in glutamate neurotransmission. Is involved in the cell surface targeting of NMDA receptors. Plays a role in associative learning and in long-term memory consolidation. In Drosophila virilis (Fruit fly), this protein is Glutamate [NMDA] receptor subunit 1.